Reading from the N-terminus, the 568-residue chain is Pre-mRNA-processing protein 45 (568 aa).

Disordered regions lie at residues 199–232, 281–449, and 545–568; these read EPPKFKHTKVPGRPASPPAPILRSPPRKLTAQDQ, LNQN…QQKI, and AGKGFEGADGEERDGPVRFVRDEE. A compositionally biased stretch (basic and acidic residues) spans 286 to 364; sequence KTMRDDIGKR…SRDGDSDRSL (79 aa). Low complexity predominate over residues 365–379; that stretch reads SRSLSASDRSYSRSR. Basic and acidic residues-rich tracts occupy residues 395–419, 426–440, and 557–568; these read RSPESRFRGRSDSRSRSPGYELERA, ERLERKREAERDLRL, and RDGPVRFVRDEE.

The protein belongs to the SNW family. As to quaternary structure, associated with the spliceosome.

The protein resides in the nucleus. Its function is as follows. Involved in pre-mRNA splicing. This is Pre-mRNA-processing protein 45 (PRP45) from Yarrowia lipolytica (strain CLIB 122 / E 150) (Yeast).